The chain runs to 124 residues: uncharacterized protein (124 aa).

This sequence belongs to the YciI family.

This is an uncharacterized protein from Rhizobium meliloti (strain 1021) (Ensifer meliloti).